We begin with the raw amino-acid sequence, 121 residues long: Putative iron-sulfur cluster insertion protein ErpA (121 aa).

Iron-sulfur cluster contacts are provided by cysteine 49, cysteine 113, and cysteine 115.

This sequence belongs to the HesB/IscA family. Homodimer. Requires iron-sulfur cluster as cofactor.

In terms of biological role, required for insertion of 4Fe-4S clusters. This Paraburkholderia phymatum (strain DSM 17167 / CIP 108236 / LMG 21445 / STM815) (Burkholderia phymatum) protein is Putative iron-sulfur cluster insertion protein ErpA.